Here is a 368-residue protein sequence, read N- to C-terminus: ATP-dependent (S)-NAD(P)H-hydrate dehydratase (368 aa).

One can recognise a YjeF C-terminal domain in the interval 3-359 (SPSKKLLANV…DEVHGSFLDL (357 aa)). (6S)-NADPHX-binding positions include G120 and 173–179 (NVVEFAR). Residues 217 to 221 (KGPHD) and 236 to 245 (GGLKRSGGQG) contribute to the ATP site. (6S)-NADPHX is bound at residue D246.

Belongs to the NnrD/CARKD family. Mg(2+) serves as cofactor.

Its subcellular location is the cytoplasm. The catalysed reaction is (6S)-NADHX + ATP = ADP + phosphate + NADH + H(+). It carries out the reaction (6S)-NADPHX + ATP = ADP + phosphate + NADPH + H(+). Catalyzes the dehydration of the S-form of NAD(P)HX at the expense of ATP, which is converted to ADP. Together with NAD(P)HX epimerase, which catalyzes the epimerization of the S- and R-forms, the enzyme allows the repair of both epimers of NAD(P)HX, a damaged form of NAD(P)H that is a result of enzymatic or heat-dependent hydration. This Ajellomyces capsulatus (strain G186AR / H82 / ATCC MYA-2454 / RMSCC 2432) (Darling's disease fungus) protein is ATP-dependent (S)-NAD(P)H-hydrate dehydratase.